A 202-amino-acid polypeptide reads, in one-letter code: Transmembrane 4 L6 family member 4 (202 aa).

At 1–9 the chain is on the cytoplasmic side; that stretch reads MCTGGCARC. Residues 10 to 30 traverse the membrane as a helical segment; the sequence is LGGTLIPLAVFGLLANILLFF. Topologically, residues 31-48 are extracellular; sequence PGGKVVNDKSHLSDEVWY. Residues 49 to 69 form a helical membrane-spanning segment; that stretch reads FGGILGSGVLMIFPALVFLGL. Topologically, residues 70–93 are cytoplasmic; the sequence is QNNDCCGCCGNEGCGKRFAMFTST. Residues 94 to 114 traverse the membrane as a helical segment; the sequence is LFAVIGFLGAGYSFIVSAVSI. Residues 115–158 are Extracellular-facing; the sequence is NKGPKCFMANGTWGYPFHDGDYLKDQALWSECEEPRDVVPWNLT. Asn156 carries an N-linked (GlcNAc...) asparagine glycan. The chain crosses the membrane as a helical span at residues 159-179; sequence LFSILLVIGGIQMVLCAIQVI. Residues 180 to 202 are Cytoplasmic-facing; that stretch reads NGLLGTLCGDCQCCGCCGGDGPV.

It belongs to the L6 tetraspanin family.

The protein resides in the membrane. Its function is as follows. Regulates the adhesive and proliferative status of intestinal epithelial cells. Can mediate density-dependent cell proliferation. This Mus musculus (Mouse) protein is Transmembrane 4 L6 family member 4 (Tm4sf4).